The chain runs to 176 residues: Glutamyl-tRNA(Gln) amidotransferase subunit F, mitochondrial (176 aa).

Belongs to the GatF family. In terms of assembly, subunit of the heterotrimeric GatFAB amidotransferase (AdT) complex, composed of A, B and F subunits.

It localises to the mitochondrion inner membrane. It catalyses the reaction L-glutamyl-tRNA(Gln) + L-glutamine + ATP + H2O = L-glutaminyl-tRNA(Gln) + L-glutamate + ADP + phosphate + H(+). Allows the formation of correctly charged Gln-tRNA(Gln) through the transamidation of misacylated Glu-tRNA(Gln) in the mitochondria. The reaction takes place in the presence of glutamine and ATP through an activated gamma-phospho-Glu-tRNA(Gln). Required for proper protein synthesis within the mitochondrion. This is Glutamyl-tRNA(Gln) amidotransferase subunit F, mitochondrial from Yarrowia lipolytica (strain CLIB 122 / E 150) (Yeast).